An 804-amino-acid polypeptide reads, in one-letter code: Elongation factor G, mitochondrial (804 aa).

The transit peptide at 1-63 (MSMHRVARAV…RHFSQSPIIR (63 aa)) directs the protein to the mitochondrion. The 287-residue stretch at 99–385 (RRVRNIGIAA…AVCDYLPNPA (287 aa)) folds into the tr-type G domain. Residues 108-115 (AHIDSGKT), 183-187 (DTPGH), and 237-240 (NKMD) contribute to the GTP site.

It belongs to the TRAFAC class translation factor GTPase superfamily. Classic translation factor GTPase family. EF-G/EF-2 subfamily.

Its subcellular location is the mitochondrion. It participates in protein biosynthesis; polypeptide chain elongation. Its function is as follows. Mitochondrial GTPase that catalyzes the GTP-dependent ribosomal translocation step during translation elongation. During this step, the ribosome changes from the pre-translocational (PRE) to the post-translocational (POST) state as the newly formed A-site-bound peptidyl-tRNA and P-site-bound deacylated tRNA move to the P and E sites, respectively. Catalyzes the coordinated movement of the two tRNA molecules, the mRNA and conformational changes in the ribosome. This is Elongation factor G, mitochondrial (mef1) from Botryotinia fuckeliana (strain B05.10) (Noble rot fungus).